Here is a 422-residue protein sequence, read N- to C-terminus: 3-phosphoshikimate 1-carboxyvinyltransferase (422 aa).

K24, S25, and R29 together coordinate 3-phosphoshikimate. K24 serves as a coordination point for phosphoenolpyruvate. 2 residues coordinate phosphoenolpyruvate: G93 and R121. Residues S164, S165, Q166, E308, and H335 each coordinate 3-phosphoshikimate. Q166 lines the phosphoenolpyruvate pocket. The Proton acceptor role is filled by E308. 3 residues coordinate phosphoenolpyruvate: R339, R380, and K405.

Belongs to the EPSP synthase family. In terms of assembly, monomer.

It localises to the cytoplasm. The catalysed reaction is 3-phosphoshikimate + phosphoenolpyruvate = 5-O-(1-carboxyvinyl)-3-phosphoshikimate + phosphate. Its pathway is metabolic intermediate biosynthesis; chorismate biosynthesis; chorismate from D-erythrose 4-phosphate and phosphoenolpyruvate: step 6/7. Functionally, catalyzes the transfer of the enolpyruvyl moiety of phosphoenolpyruvate (PEP) to the 5-hydroxyl of shikimate-3-phosphate (S3P) to produce enolpyruvyl shikimate-3-phosphate and inorganic phosphate. This chain is 3-phosphoshikimate 1-carboxyvinyltransferase, found in Saccharopolyspora erythraea (strain ATCC 11635 / DSM 40517 / JCM 4748 / NBRC 13426 / NCIMB 8594 / NRRL 2338).